Reading from the N-terminus, the 412-residue chain is MAQRQFFGLTYNFYGQPAPLFDLNDLQELAGCYARPWTSRFSHLAISTGSLPVWSARYPSVASRNIIVNTLLGAHLNPFAGGQVTSHQGITWRDPVLSSLAPVPAIQPPPVWAVAENVPLDSNNYPTYVLNLSSMWPINQDVHIMTMWALSDQGPIYHLEVPVDPMPAATTAALMAYIGVPIAHLAQTAYRFAGQLPQSPDSTMVSTIRWLSAIWFGSLTGRLNRSRTCNGFYFEFAKPALNPDQAVLKWNDGARAAPPAAAQSSYMRCISPHWQHQIVEVAGALMSQSVTAVTGLPALIDEATLPAWSQGVANLTGNGQGVVPCLDYNPVPMAAARHLQWRQDGLITAAQEAQLNNDYTAYALTIERHLTAMLVANPIAAGRMPIQPFNAADFGQAGQTAAAVALAQAMFV.

The protein belongs to the reoviridae clamp protein family. Interacts with capsid proteins VP3, VP5 and VP7.

It localises to the virion. Located at the interface of the incomplete T=13 outer capsid and the pseudo T=2 inner capsid, 120 VP6 subunits clamp and stabilizes the inner capsid shell. This is Clamp protein VP6 (S8) from Aquareovirus C (isolate Golden shiner/USA/GSRV/1977) (AQRV-C).